The sequence spans 200 residues: Troponin I-like protein (200 aa).

Disordered regions lie at residues 1–20 (MGDEEKRKMEEKERKKAEVR) and 181–200 (ENKADKKPEWALGSKKENEE). A coiled-coil region spans residues 2-116 (GDEEKRKMEE…EDAKYDLEYE (115 aa)).

This sequence belongs to the troponin I family. Expressed in salivary gland, gut, muscle and cuticle (at protein level).

Its function is as follows. Inhibits endothelial cell proliferation and angiogenesis in a vertebrate host. Probably required for efficient blood feeding on vertebrate hosts. In Haemaphysalis longicornis (Bush tick), this protein is Troponin I-like protein.